Here is a 132-residue protein sequence, read N- to C-terminus: Small ribosomal subunit protein uS8 (132 aa).

It belongs to the universal ribosomal protein uS8 family. As to quaternary structure, part of the 30S ribosomal subunit. Contacts proteins S5 and S12.

One of the primary rRNA binding proteins, it binds directly to 16S rRNA central domain where it helps coordinate assembly of the platform of the 30S subunit. The polypeptide is Small ribosomal subunit protein uS8 (Listeria innocua serovar 6a (strain ATCC BAA-680 / CLIP 11262)).